The chain runs to 578 residues: Ketol-acid reductoisomerase, chloroplastic (578 aa).

Residues methionine 1–threonine 52 constitute a chloroplast transit peptide. One can recognise a KARI N-terminal Rossmann domain in the interval valine 90–threonine 288. Residues glycine 111 to glutamine 118, arginine 144 to serine 149, and serine 183 to glutamine 187 contribute to the NADP(+) site. Histidine 208 is a catalytic residue. KARI C-terminal knotted domains are found at residues threonine 289–asparagine 437 and aspartate 438–leucine 574. The Mg(2+) site is built by aspartate 297, glutamate 301, glutamate 474, and glutamate 478. Serine 500 serves as a coordination point for substrate.

It belongs to the ketol-acid reductoisomerase family. As to quaternary structure, homodimer. Requires Mg(2+) as cofactor.

The protein localises to the plastid. It localises to the chloroplast. The catalysed reaction is (2R)-2,3-dihydroxy-3-methylbutanoate + NADP(+) = (2S)-2-acetolactate + NADPH + H(+). It catalyses the reaction (2R,3R)-2,3-dihydroxy-3-methylpentanoate + NADP(+) = (S)-2-ethyl-2-hydroxy-3-oxobutanoate + NADPH + H(+). It participates in amino-acid biosynthesis; L-isoleucine biosynthesis; L-isoleucine from 2-oxobutanoate: step 2/4. Its pathway is amino-acid biosynthesis; L-valine biosynthesis; L-valine from pyruvate: step 2/4. This chain is Ketol-acid reductoisomerase, chloroplastic, found in Oryza sativa subsp. japonica (Rice).